The following is a 271-amino-acid chain: N-acetyltransferase ECO1 (271 aa).

The interval 1-38 (MKTYRAKRKYLSESEDDVFSSSPTQSPETSPLQPPNES) is disordered. Over residues 20–31 (SSSPTQSPETSP) the composition is skewed to low complexity. The segment at 80 to 104 (TTCKTCGMTYQVAYGPDISAHKSFH) adopts a CCHH-type zinc-finger fold.

It belongs to the acetyltransferase family. ECO subfamily.

Its subcellular location is the nucleus. Its function is as follows. Probable acetyltransferase required for the establishment of sister chromatid cohesion and couple the processes of cohesion and DNA replication to ensure that only sister chromatids become paired together. In contrast to the structural cohesins, the deposition and establishment factors are required only during S phase. Acts by acetylating the cohesin complex component SMC3. The chain is N-acetyltransferase ECO1 (ECO1) from Yarrowia lipolytica (strain CLIB 122 / E 150) (Yeast).